A 317-amino-acid polypeptide reads, in one-letter code: Acetyl-coenzyme A carboxylase carboxyl transferase subunit alpha (317 aa).

A CoA carboxyltransferase C-terminal domain is found at arginine 40–glutamate 294.

This sequence belongs to the AccA family. Acetyl-CoA carboxylase is a heterohexamer composed of biotin carboxyl carrier protein (AccB), biotin carboxylase (AccC) and two subunits each of ACCase subunit alpha (AccA) and ACCase subunit beta (AccD).

The protein resides in the cytoplasm. It catalyses the reaction N(6)-carboxybiotinyl-L-lysyl-[protein] + acetyl-CoA = N(6)-biotinyl-L-lysyl-[protein] + malonyl-CoA. It participates in lipid metabolism; malonyl-CoA biosynthesis; malonyl-CoA from acetyl-CoA: step 1/1. Functionally, component of the acetyl coenzyme A carboxylase (ACC) complex. First, biotin carboxylase catalyzes the carboxylation of biotin on its carrier protein (BCCP) and then the CO(2) group is transferred by the carboxyltransferase to acetyl-CoA to form malonyl-CoA. In Haemophilus ducreyi (strain 35000HP / ATCC 700724), this protein is Acetyl-coenzyme A carboxylase carboxyl transferase subunit alpha.